A 323-amino-acid polypeptide reads, in one-letter code: Beta-ketoacyl-[acyl-carrier-protein] synthase III (323 aa).

Catalysis depends on residues C113 and H250. Residues 251-255 (QANKR) are ACP-binding. N280 is a catalytic residue.

This sequence belongs to the thiolase-like superfamily. FabH family. As to quaternary structure, homodimer.

It is found in the cytoplasm. The catalysed reaction is malonyl-[ACP] + acetyl-CoA + H(+) = 3-oxobutanoyl-[ACP] + CO2 + CoA. It participates in lipid metabolism; fatty acid biosynthesis. Catalyzes the condensation reaction of fatty acid synthesis by the addition to an acyl acceptor of two carbons from malonyl-ACP. Catalyzes the first condensation reaction which initiates fatty acid synthesis and may therefore play a role in governing the total rate of fatty acid production. Possesses both acetoacetyl-ACP synthase and acetyl transacylase activities. Its substrate specificity determines the biosynthesis of branched-chain and/or straight-chain of fatty acids. This Brucella canis (strain ATCC 23365 / NCTC 10854 / RM-666) protein is Beta-ketoacyl-[acyl-carrier-protein] synthase III.